The following is a 284-amino-acid chain: uncharacterized protein (284 aa).

The first 23 residues, 1-23 (MKRGCAIAVMICGLITSVSAASA), serve as a signal peptide directing secretion.

The protein belongs to the surface antigen msp4 family.

This is an uncharacterized protein from Brucella melitensis biotype 1 (strain ATCC 23456 / CCUG 17765 / NCTC 10094 / 16M).